Consider the following 388-residue polypeptide: Succinate--CoA ligase [ADP-forming] subunit beta (388 aa).

Residues 9 to 244 form the ATP-grasp domain; it reads KSLFAEYGLP…PSQDDAREAH (236 aa). ATP is bound by residues Lys-46, 53–55, Glu-99, Thr-102, and Glu-107; that span reads GRG. 2 residues coordinate Mg(2+): Asn-199 and Asp-213. Substrate-binding positions include Asn-264 and 321 to 323; that span reads GIV.

The protein belongs to the succinate/malate CoA ligase beta subunit family. As to quaternary structure, heterotetramer of two alpha and two beta subunits. Requires Mg(2+) as cofactor.

It carries out the reaction succinate + ATP + CoA = succinyl-CoA + ADP + phosphate. It catalyses the reaction GTP + succinate + CoA = succinyl-CoA + GDP + phosphate. Its pathway is carbohydrate metabolism; tricarboxylic acid cycle; succinate from succinyl-CoA (ligase route): step 1/1. In terms of biological role, succinyl-CoA synthetase functions in the citric acid cycle (TCA), coupling the hydrolysis of succinyl-CoA to the synthesis of either ATP or GTP and thus represents the only step of substrate-level phosphorylation in the TCA. The beta subunit provides nucleotide specificity of the enzyme and binds the substrate succinate, while the binding sites for coenzyme A and phosphate are found in the alpha subunit. In Shewanella putrefaciens (strain CN-32 / ATCC BAA-453), this protein is Succinate--CoA ligase [ADP-forming] subunit beta.